The sequence spans 242 residues: Argininosuccinate synthase (242 aa).

Belongs to the argininosuccinate synthase family. Type 2 subfamily. Homotetramer.

Its subcellular location is the cytoplasm. The catalysed reaction is L-citrulline + L-aspartate + ATP = 2-(N(omega)-L-arginino)succinate + AMP + diphosphate + H(+). The protein operates within amino-acid biosynthesis; L-arginine biosynthesis; L-arginine from L-ornithine and carbamoyl phosphate: step 2/3. The chain is Argininosuccinate synthase (argG) from Dickeya chrysanthemi (Pectobacterium chrysanthemi).